Here is a 1065-residue protein sequence, read N- to C-terminus: Probable arabinosyltransferase B (1065 aa).

The next 12 membrane-spanning stretches (helical) occupy residues 15 to 37 (WVATIAGLIGFVLSVATPLLPVV), 204 to 226 (LKLAAMVTAILATIVALVALWRL), 241 to 263 (NWRTFTLADVAVIFGFVLWHVIG), 394 to 413 (YSRLTPAALAVITAAFTLGV), 417 to 436 (GLIAVAALVAGGRPILRILV), 441 to 463 (VVGTWPLVAPMLAAGTVILTVVF), 510 to 527 (FGFLITALCLFTAVFIML), 540 to 557 (AWRLMGVIFGTMFFLMFT), 567 to 589 (LFAAVGAAMAALTTVLVSPAVLG), 596 to 618 (AFLAALLFMMALCFATTNGWWYV), 633 to 655 (GGITVSTVFFSMFVAAALYAIWL), and 667 to 689 (LARALTAAPVPLAAGFMALVFIA).

Belongs to the emb family.

Its subcellular location is the cell membrane. Functionally, arabinosyl transferase responsible for the polymerization of arabinose into the arabinan of arabinogalactan. The protein is Probable arabinosyltransferase B (embB) of Mycobacterium avium.